The following is a 180-amino-acid chain: Large ribosomal subunit protein uL6 (180 aa).

This sequence belongs to the universal ribosomal protein uL6 family. As to quaternary structure, part of the 50S ribosomal subunit.

In terms of biological role, this protein binds to the 23S rRNA, and is important in its secondary structure. It is located near the subunit interface in the base of the L7/L12 stalk, and near the tRNA binding site of the peptidyltransferase center. The polypeptide is Large ribosomal subunit protein uL6 (Thermodesulfovibrio yellowstonii (strain ATCC 51303 / DSM 11347 / YP87)).